The primary structure comprises 342 residues: tRNA-specific 2-thiouridylase MnmA (342 aa).

ATP is bound by residues 6–13 and L32; that span reads LLSGGVDS. The active-site Nucleophile is the C92. Residues C92 and C191 are joined by a disulfide bond. G116 is an ATP binding site. Residues 138-140 are interaction with tRNA; sequence KDQ. The Cysteine persulfide intermediate role is filled by C191. The interaction with tRNA stretch occupies residues 293–294; the sequence is RY.

It belongs to the MnmA/TRMU family.

The protein resides in the cytoplasm. The catalysed reaction is S-sulfanyl-L-cysteinyl-[protein] + uridine(34) in tRNA + AH2 + ATP = 2-thiouridine(34) in tRNA + L-cysteinyl-[protein] + A + AMP + diphosphate + H(+). In terms of biological role, catalyzes the 2-thiolation of uridine at the wobble position (U34) of tRNA, leading to the formation of s(2)U34. The polypeptide is tRNA-specific 2-thiouridylase MnmA (Helicobacter pylori (strain HPAG1)).